A 211-amino-acid chain; its full sequence is N-(5'-phosphoribosyl)anthranilate isomerase (211 aa).

It belongs to the TrpF family.

It catalyses the reaction N-(5-phospho-beta-D-ribosyl)anthranilate = 1-(2-carboxyphenylamino)-1-deoxy-D-ribulose 5-phosphate. It functions in the pathway amino-acid biosynthesis; L-tryptophan biosynthesis; L-tryptophan from chorismate: step 3/5. The polypeptide is N-(5'-phosphoribosyl)anthranilate isomerase (Hyphomonas neptunium (strain ATCC 15444)).